The chain runs to 709 residues: Transcriptional factor SWI5 (709 aa).

Residue S225 is modified to Phosphoserine. Residues 245 to 264 are compositionally biased toward polar residues; sequence LSPMISPPMSNTSFTGSPSR. A disordered region spans residues 245–267; sequence LSPMISPPMSNTSFTGSPSRRNN. Residues S278 and S300 each carry the phosphoserine modification. T339 carries the post-translational modification Phosphothreonine. S376 is subject to Phosphoserine. Residues 443–483 are disordered; it reads LKPPSQQARHREGVFNDLDPNVLTKNTDNEGDDNEENEPES. The segment covering 471–480 has biased composition (acidic residues); sequence NEGDDNEENE. S488, S492, and S505 each carry phosphoserine. A Phosphoserine; by CDC28 modification is found at S522. 3 consecutive C2H2-type zinc fingers follow at residues 550 to 574, 580 to 604, and 609 to 632; these read FECLFPGCTKTFKRRYNIRSHIQTH, YSCDHPGCDKAFVRNHDLIRHKKSH, and YACPCGKKFNREDALVVHRSRMIC. A Nuclear localization signal motif is present at residues 635–659; the sequence is GKKYENVVIKRSPRKRGRPRKDGTS. The tract at residues 644 to 677 is disordered; sequence KRSPRKRGRPRKDGTSSVSSSPIKENINKDHNGQ. The residue at position 646 (S646) is a Phosphoserine; by CDC28. The a.T hook DNA-binding region spans 647–659; the sequence is PRKRGRPRKDGTS. S664 bears the Phosphoserine; by CDC28 mark.

Cell cycle-dependent phosphorylation of three serine residues prevents SWI5 from entering the nucleus, and it accumulates in the cytoplasm. As a consequence of CDC28 kinase inactivation at the end of anaphase, the three serine residues are dephosphorylated and SWI5 enters the nucleus to activate transcription. It is then rapidly degraded. Threonine phosphorylation also seems to occur. Post-translationally, phosphorylated by PHO85.

The protein resides in the nucleus. Its subcellular location is the cytoplasm. Determines the mother-cell-specific transcription of the HO endonuclease gene that is responsible for the initiation of mating-type switching in yeast. Recognizes a specific sequence in the promoter of the HO gene. Activates EGT2 transcription in a concentration-dependent manner. Synthesized during G2 and early mitosis. The polypeptide is Transcriptional factor SWI5 (SWI5) (Saccharomyces cerevisiae (strain ATCC 204508 / S288c) (Baker's yeast)).